We begin with the raw amino-acid sequence, 694 residues long: Methionine--tRNA ligase (694 aa).

A 'HIGH' region motif is present at residues 12-22; sequence PYANGPLHLGH. Zn(2+)-binding residues include cysteine 143, cysteine 146, cysteine 156, and cysteine 159. The 'KMSKS' region motif lies at 330–334; that stretch reads KMSKS. Lysine 333 is an ATP binding site. Residues 550 to 577 are disordered; the sequence is LAAPATPATASKPAPAKADAKPAAAANP. Positions 551–575 are enriched in low complexity; it reads AAPATPATASKPAPAKADAKPAAAA. A tRNA-binding domain is found at 591–694; sequence DFAKLDLRIG…SGAQPGMPVR (104 aa).

This sequence belongs to the class-I aminoacyl-tRNA synthetase family. MetG type 1 subfamily. As to quaternary structure, homodimer. Zn(2+) serves as cofactor.

The protein localises to the cytoplasm. The catalysed reaction is tRNA(Met) + L-methionine + ATP = L-methionyl-tRNA(Met) + AMP + diphosphate. Is required not only for elongation of protein synthesis but also for the initiation of all mRNA translation through initiator tRNA(fMet) aminoacylation. This chain is Methionine--tRNA ligase, found in Xanthomonas axonopodis pv. citri (strain 306).